We begin with the raw amino-acid sequence, 387 residues long: SLC2A4 regulator (387 aa).

2 disordered regions span residues 1–97 (MERP…RATP) and 139–179 (EALV…PPEA). Residues 27–36 (GPGPRAAPVT) show a composition bias toward low complexity. The C2H2-type zinc-finger motif lies at 200–225 (FQCLWKSCGKVLSTASAMQRHIRLVH). The Nuclear export signal signature appears at 253 to 263 (LTDGLSSLTPV). Phosphoserine is present on residues Ser264 and Ser268. Residues 283–305 (EPPALPSPLRPPAPPLPPPPVLS) form a disordered region. Positions 285–303 (PALPSPLRPPAPPLPPPPV) are enriched in pro residues. Residues 351-354 (RKPR) carry the Nuclear localization signal motif.

Interacts with MEF2A. As to expression, according to PubMed:14630949, expressed in heart, skeletal muscle, liver, kidney and pancreas; undetectable in lung, placenta or brain. According to PubMed:14625278, ubiquitously expressed, with lowest expression in brain and ileum.

It is found in the cytoplasm. The protein localises to the nucleus. Functionally, transcription factor involved in SLC2A4 and HD gene transactivation. Binds to the consensus sequence 5'-GCCGGCG-3'. This chain is SLC2A4 regulator (SLC2A4RG), found in Homo sapiens (Human).